A 217-amino-acid polypeptide reads, in one-letter code: Insulin-like growth factor 2.S (217 aa).

The signal sequence occupies residues 1–56 (MEQLSCKHRSSSVEAEAQLCRQTESRSTQLPRMSVMRHLFLLSITFLVYTLDSAKA). The b stretch occupies residues 57 to 83 (YRATETLCGGELVDTLQFVCGDRGFYF). 3 cysteine pairs are disulfide-bonded: C64–C103, C76–C116, and C102–C107. The segment at 84 to 96 (STNNGRSNRRPNR) is c. The segment at 97–117 (GIVDVCCFKSCDLELLETYCA) is a. Residues 118–123 (KPTKNE) form a d region. Residues 124-217 (RDVSTAPATA…LQQASEPSHN (94 aa)) constitute a propeptide, e peptide.

Belongs to the insulin family.

It localises to the secreted. The insulin-like growth factors, isolated from plasma, are structurally and functionally related to insulin but have a much higher growth-promoting activity. Promotes anterior neural development. Acts as a ligand for integrin which is required for IGF2 signaling. The protein is Insulin-like growth factor 2.S of Xenopus laevis (African clawed frog).